The primary structure comprises 716 residues: Protein C-mannosyl-transferase DPY19L3 (716 aa).

Residues 1–43 are Cytoplasmic-facing; it reads MMSIRQRREIRATEVSEDFPAQEENVKLENKLPSGCTSRRLWK. The chain crosses the membrane as a helical span at residues 44–64; the sequence is ILSLTIGGTIALCIGLLTSVY. Over 65-154 the chain is Lumenal; that stretch reads LATLHENDLW…RVLPIQKYLE (90 aa). Residue Asn-118 is glycosylated (N-linked (GlcNAc...) asparagine). Residues 155-182 form a helical membrane-spanning segment; the sequence is PVYFYIYTLFGLQAIYVTALYITSWLLS. Topologically, residues 183-184 are cytoplasmic; that stretch reads GT. An intramembrane region (name=3) is located at residues 185–197; it reads WLSGLLAAFWYVT. The Cytoplasmic portion of the chain corresponds to 198–215; the sequence is NRIDTTRVEFTIPLRENW. Residues 216 to 230 constitute an intramembrane region (name=4); the sequence is ALPFFAIQIAAITYF. Topologically, residues 231–239 are cytoplasmic; the sequence is LRPNLQPLS. A helical transmembrane segment spans residues 240 to 256; sequence ERLTLLAIFISTFLFSL. At 257-262 the chain is on the lumenal side; it reads TWQFNQ. A helical transmembrane segment spans residues 263–279; the sequence is FMMLMQALVLFTLDSLD. At 280–289 the chain is on the cytoplasmic side; the sequence is MLPAVKATWL. The helical transmembrane segment at 290–306 threads the bilayer; the sequence is YGIQITSLLLVCILQFF. Residues 307–308 lie on the Lumenal side of the membrane; that stretch reads NS. A helical transmembrane segment spans residues 309–323; sequence MILGSLLISFNLSVF. Residues 324 to 338 lie on the Cytoplasmic side of the membrane; that stretch reads IARKLQKNLKTGSFL. Residues 339–359 form a helical membrane-spanning segment; sequence NRLGKLLLHLFMVLCLTLFLN. Residues 360-414 lie on the Lumenal side of the membrane; it reads NIIKKILNLKSDEHIFKFLKAKFGLGATRDFDANLYLCEEAFGLLPFNTFGRLSD. The helical transmembrane segment at 415-437 threads the bilayer; it reads TLLFYAYIFVLSITVIVAFVVAF. Residues 438–465 are Cytoplasmic-facing; the sequence is HNLSDSTNQQSVGKMEKGTVDLKPETAY. The helical transmembrane segment at 466–485 threads the bilayer; sequence NLIHTILFGFLALSTMRMKY. Over 486 to 487 the chain is Lumenal; the sequence is LW. A helical membrane pass occupies residues 488-499; the sequence is TSHMCVFASFGL. Over 500–522 the chain is Cytoplasmic; the sequence is CSPEIWELLLKSVHLYNPKRICI. The helical transmembrane segment at 523–539 threads the bilayer; that stretch reads MRYSVPILILLYLCYKF. Residues 540–716 lie on the Lumenal side of the membrane; it reads WPGMMDELSE…FHVYKLSRNK (177 aa). Asn-704 is a glycosylation site (N-linked (GlcNAc...) asparagine).

The protein belongs to the dpy-19 family. In terms of tissue distribution, widely expressed.

It localises to the endoplasmic reticulum membrane. It carries out the reaction L-tryptophyl-[protein] + a di-trans,poly-cis-dolichyl beta-D-mannosyl phosphate = C-alpha-D-mannosyl-L-tryptophyl-[protein] + a di-trans,poly-cis-dolichyl phosphate + H(+). The protein operates within protein modification; protein glycosylation. Its function is as follows. C-mannosyltransferase that mediates C-mannosylation of tryptophan residues on target proteins. The reaction occurs on the luminal side of the endoplasmic reticulum and involves the transfer of a mannose unit from a dolichylphosphate mannose (Dol-P-Man) donor to an acceptor protein containing a WxxW or WxxC consensus sequence. C-mannosylates RSPO1, a Wnt signaling regulator, preferentially at the first Trp residue in the sequence WxxW. C-mannosylates the netrin receptor UNC5A, preferentially at the third tryptophan of WxxWxxWxxC sequence. Has no C-mannosyltransferase activity. This is Protein C-mannosyl-transferase DPY19L3 (DPY19L3) from Homo sapiens (Human).